The following is a 78-amino-acid chain: Sec-independent protein translocase protein TatA (78 aa).

The chain crosses the membrane as a helical span at residues 1-21 (MGSLSIWHWIVVLAVVLLLFG). The segment at 43 to 78 (LAEDDEPAKTPAAPPEAPRPLPHQTSSAAEAEKKPV) is disordered. Over residues 54–63 (AAPPEAPRPL) the composition is skewed to pro residues.

Belongs to the TatA/E family. The Tat system comprises two distinct complexes: a TatABC complex, containing multiple copies of TatA, TatB and TatC subunits, and a separate TatA complex, containing only TatA subunits. Substrates initially bind to the TatABC complex, which probably triggers association of the separate TatA complex to form the active translocon.

The protein localises to the cell inner membrane. Functionally, part of the twin-arginine translocation (Tat) system that transports large folded proteins containing a characteristic twin-arginine motif in their signal peptide across membranes. TatA could form the protein-conducting channel of the Tat system. The chain is Sec-independent protein translocase protein TatA from Xanthobacter autotrophicus (strain ATCC BAA-1158 / Py2).